The sequence spans 574 residues: Bifunctional NADP phosphatase/NAD kinase (574 aa).

The segment at 1-297 is NADP phosphatase; the sequence is MVIMEGFKIA…KLIALFGNRW (297 aa). Residues Glu-69, Asp-87, Ile-89, Asp-90, and Asp-243 each coordinate Mg(2+). An NAD kinase region spans residues 302–574; the sequence is VKFGIVVRED…NKLSRCLGIK (273 aa). Asp-362 functions as the Proton acceptor in the catalytic mechanism. Residues 362–363, Arg-367, 436–437, Lys-447, Arg-464, Asp-466, and 477–482 each bind NAD(+); these read DG, NE, and TAYSLS.

The protein in the N-terminal section; belongs to the inositol monophosphatase superfamily. In the C-terminal section; belongs to the NAD kinase family. As to quaternary structure, homotetramer. Requires Mg(2+) as cofactor.

The protein resides in the cytoplasm. The catalysed reaction is NAD(+) + ATP = ADP + NADP(+) + H(+). It carries out the reaction NADP(+) + H2O = phosphate + NAD(+). It catalyses the reaction UTP + NAD(+) = UDP + NADP(+) + H(+). The enzyme catalyses 5-methyl-UTP + NAD(+) = 5-methyl-UDP + NADP(+) + H(+). The catalysed reaction is CTP + NAD(+) = CDP + NADP(+) + H(+). It carries out the reaction GTP + NAD(+) = GDP + NADP(+) + H(+). It catalyses the reaction dATP + NAD(+) = dADP + NADP(+) + H(+). The enzyme catalyses NADPH + H2O = phosphate + NADH. The catalysed reaction is adenosine 2'-phosphate + H2O = adenosine + phosphate. It carries out the reaction beta-D-fructose 1,6-bisphosphate + H2O = beta-D-fructose 6-phosphate + phosphate. With respect to regulation, phosphatase activity is slightly inhibited by ADP, NADH and ATP, and moderately inhibited by NAD and 5'-AMP. Kinase activity is slightly inhibited by ADP and NADP. Involved in the regulation of the intracellular balance between NAD(H) and NADP(H), and is a key enzyme in the biosynthesis of NADP. Catalyzes the phosphorylation and dephosphorylation of NAD and NADP, respectively. Although it shows conflicting dual activities and is able to supply NADP, it seems that its physiological role is to prevent excess accumulation of NADP. Kinase can use ATP and other nucleoside triphosphates (UTP, TTP, CTP, GTP) as well as inorganic polyphosphate (poly(P)) as phosphoryl donors, however poly(P) is not considered to be the physiological phosphoryl donor. NAD is the preferred substrate for the kinase, but NADH can also be used as phosphoryl acceptor. Phosphatase can use NADP or NADPH as phosphoryl donor, but NADP is the preferred substrate. Phosphatase also has an activity toward the terminal phosphate group at C-2 of adenosine in 2'-AMP and toward the phosphate group at C-1 of fructose 1,6-bisphosphate, but not toward inositol 1-phosphate. This chain is Bifunctional NADP phosphatase/NAD kinase, found in Methanocaldococcus jannaschii (strain ATCC 43067 / DSM 2661 / JAL-1 / JCM 10045 / NBRC 100440) (Methanococcus jannaschii).